Consider the following 245-residue polypeptide: Small ribosomal subunit protein uS3 (245 aa).

The KH type-2 domain maps to 38 to 106 (IRKYLNTRLA…EVQINIFEIK (69 aa)). Residues 225–245 (YEGSGDKSVKRRKRNGIKKNE) form a disordered region. A compositionally biased stretch (basic residues) spans 233–245 (VKRRKRNGIKKNE).

It belongs to the universal ribosomal protein uS3 family. In terms of assembly, part of the 30S ribosomal subunit. Forms a tight complex with proteins S10 and S14.

Binds the lower part of the 30S subunit head. Binds mRNA in the 70S ribosome, positioning it for translation. This is Small ribosomal subunit protein uS3 from Azobacteroides pseudotrichonymphae genomovar. CFP2.